Consider the following 98-residue polypeptide: MSMVYANIFLAFIMSLMGLLMYRSHLMSSLLCLEGMMLSLFVMMTVTILNNHFTLANMAPIILLVFAACEAALGLLLLVMVSNTYGTDYVQNLNLLQC.

The next 3 membrane-spanning stretches (helical) occupy residues 1 to 21 (MSMVYANIFLAFIMSLMGLLM), 29 to 49 (SLLCLEGMMLSLFVMMTVTIL), and 61 to 81 (IILLVFAACEAALGLLLLVMV).

The protein belongs to the complex I subunit 4L family. In terms of assembly, core subunit of respiratory chain NADH dehydrogenase (Complex I) which is composed of 45 different subunits.

The protein resides in the mitochondrion inner membrane. The enzyme catalyses a ubiquinone + NADH + 5 H(+)(in) = a ubiquinol + NAD(+) + 4 H(+)(out). Core subunit of the mitochondrial membrane respiratory chain NADH dehydrogenase (Complex I) which catalyzes electron transfer from NADH through the respiratory chain, using ubiquinone as an electron acceptor. Part of the enzyme membrane arm which is embedded in the lipid bilayer and involved in proton translocation. The polypeptide is NADH-ubiquinone oxidoreductase chain 4L (MT-ND4L) (Pusa hispida (Ringed seal)).